The following is a 603-amino-acid chain: Polypeptide N-acetylgalactosaminyltransferase 9 (603 aa).

Residues 1–6 (MAVARK) lie on the Cytoplasmic side of the membrane. A helical; Signal-anchor for type II membrane protein transmembrane segment spans residues 7-29 (IRTLLTVNILVFVGIVLFSVYCR). Over 30–603 (LQGRSQELVR…IRNWIKHARH (574 aa)) the chain is Lumenal. Intrachain disulfides connect Cys141–Cys372 and Cys363–Cys442. Residues 150 to 261 (LPQVSVVFIF…TGWAEPALSR (112 aa)) are catalytic subdomain A. Residues Asp191 and Arg222 each coordinate substrate. Positions 245, 247, and 377 each coordinate Mn(2+). The segment at 318–380 (PIRTPAMIGC…PCSRVAHIER (63 aa)) is catalytic subdomain B. The substrate site is built by Arg380 and Tyr385. Asn460 carries an N-linked (GlcNAc...) asparagine glycan. The region spanning 464 to 600 (TYGEVRNSKA…KWMIRNWIKH (137 aa)) is the Ricin B-type lectin domain. 3 cysteine pairs are disulfide-bonded: Cys477–Cys493, Cys525–Cys540, and Cys567–Cys587.

Belongs to the glycosyltransferase 2 family. GalNAc-T subfamily. Mn(2+) is required as a cofactor. Specifically expressed in brain. Not expressed in heart, placenta, lung, liver, skeletal muscle, kidney, pancreas, spleen, thymus, prostate, testis, ovary, small intestine, colon and leukocyte. In brain, it is expressed in cerebellum, frontal lobe, temporal lobe, putamen and spinal cord, weakly expressed in cerebral cortex. Not expressed in medulla and occipital pole.

It localises to the golgi apparatus membrane. It carries out the reaction L-seryl-[protein] + UDP-N-acetyl-alpha-D-galactosamine = a 3-O-[N-acetyl-alpha-D-galactosaminyl]-L-seryl-[protein] + UDP + H(+). It catalyses the reaction L-threonyl-[protein] + UDP-N-acetyl-alpha-D-galactosamine = a 3-O-[N-acetyl-alpha-D-galactosaminyl]-L-threonyl-[protein] + UDP + H(+). It functions in the pathway protein modification; protein glycosylation. In terms of biological role, catalyzes the initial reaction in O-linked oligosaccharide biosynthesis, the transfer of an N-acetyl-D-galactosamine residue to a serine or threonine residue on the protein receptor. Does not glycosylate apomucin or SDC3. The chain is Polypeptide N-acetylgalactosaminyltransferase 9 (GALNT9) from Homo sapiens (Human).